The following is a 282-amino-acid chain: Lipoyl synthase (282 aa).

Cys37, Cys42, Cys48, Cys63, Cys67, Cys70, and Ser274 together coordinate [4Fe-4S] cluster. The 215-residue stretch at 49–263 folds into the Radical SAM core domain; that stretch reads WGKGTATFMI…KTIGLEKGFS (215 aa).

It belongs to the radical SAM superfamily. Lipoyl synthase family. The cofactor is [4Fe-4S] cluster.

The protein localises to the cytoplasm. It catalyses the reaction [[Fe-S] cluster scaffold protein carrying a second [4Fe-4S](2+) cluster] + N(6)-octanoyl-L-lysyl-[protein] + 2 oxidized [2Fe-2S]-[ferredoxin] + 2 S-adenosyl-L-methionine + 4 H(+) = [[Fe-S] cluster scaffold protein] + N(6)-[(R)-dihydrolipoyl]-L-lysyl-[protein] + 4 Fe(3+) + 2 hydrogen sulfide + 2 5'-deoxyadenosine + 2 L-methionine + 2 reduced [2Fe-2S]-[ferredoxin]. The protein operates within protein modification; protein lipoylation via endogenous pathway; protein N(6)-(lipoyl)lysine from octanoyl-[acyl-carrier-protein]: step 2/2. Catalyzes the radical-mediated insertion of two sulfur atoms into the C-6 and C-8 positions of the octanoyl moiety bound to the lipoyl domains of lipoate-dependent enzymes, thereby converting the octanoylated domains into lipoylated derivatives. This Bacteroides thetaiotaomicron (strain ATCC 29148 / DSM 2079 / JCM 5827 / CCUG 10774 / NCTC 10582 / VPI-5482 / E50) protein is Lipoyl synthase.